The chain runs to 278 residues: MPRLSLLLPLLLLLLLPLLPPLSPSLGIRDVGGRRPKCGPCRPEGCPAPAPCPAPGISALDECGCCARCLGAEGASCGGRAGGRCGPGLVCASQAAGAAPEGTGLCVCAQRGTVCGSDGRSYPSVCALRLRARHTPRAHPGHLHKARDGPCEFAPVVVVPPRSVHNVTGAQVGLSCEVRAVPTPVITWRKVTKSPEGTQALEELPGDHVNIAVQVRGGPSDHEATAWILINPLRKEDEGVYQCHAANMVGEAESHSTVTVLDLSKYRSFHFPAPDDRM.

Residues 1-25 (MPRLSLLLPLLLLLLLPLLPPLSPS) form the signal peptide. The IGFBP N-terminal domain occupies 34–109 (RRPKCGPCRP…PEGTGLCVCA (76 aa)). 7 disulfide bridges follow: Cys38-Cys63, Cys41-Cys65, Cys46-Cys66, Cys52-Cys69, Cys77-Cys91, Cys85-Cys106, and Cys115-Cys151. The Kazal-like domain maps to 95–153 (AAGAAPEGTGLCVCAQRGTVCGSDGRSYPSVCALRLRARHTPRAHPGHLHKARDGPCEF). An Ig-like C2-type domain is found at 155–259 (PVVVVPPRSV…GEAESHSTVT (105 aa)). A glycan (N-linked (GlcNAc...) asparagine) is linked at Asn166. Cys176 and Cys243 are joined by a disulfide.

Expressed at the highest level in both brain and testis, with lower levels in the prostate, bladder and lung.

Its subcellular location is the secreted. Functionally, IGF-binding proteins prolong the half-life of IGFs and have been shown to either inhibit or stimulate the growth promoting effects of the IGFs in cell culture. They alter the interaction of IGFs with their cell surface receptors. May be a putative tumor suppressor protein. The chain is Insulin-like growth factor-binding protein-like 1 (IGFBPL1) from Homo sapiens (Human).